The following is a 653-amino-acid chain: Exocyst complex component 7 (653 aa).

The SEC8 and ARHQ binding stretch occupies residues 1–384 (MIPPQEASAR…TKNKLPGLIT (384 aa)). Coiled-coil stretches lie at residues 5-42 (QEAS…TKNM) and 63-85 (VHKQ…SCLD). Ser-133 is modified (phosphoserine). Positions 238 to 272 (FRKSSSSSGVPYSPAIPNKRKDTPTKKPIKRPGRD) are disordered.

This sequence belongs to the EXO70 family. As to quaternary structure, the exocyst complex is composed of EXOC1, EXOC2, EXOC3, EXOC4, EXOC5, EXOC6, EXOC7 and EXOC8. Interacts with ARHQ in a GTP-dependent manner. Interacts with RAB11FIP3.

It is found in the cytoplasm. The protein resides in the cytosol. It localises to the cell membrane. The protein localises to the midbody. Its subcellular location is the midbody ring. Its function is as follows. Component of the exocyst complex involved in the docking of exocytic vesicles with fusion sites on the plasma membrane. In adipocytes, plays a crucial role in targeting SLC2A4 vesicle to the plasma membrane in response to insulin, perhaps directing the vesicle to the precise site of fusion. It is required for neuron survival and plays an essential role in cortical development. This chain is Exocyst complex component 7 (Exoc7), found in Rattus norvegicus (Rat).